Consider the following 192-residue polypeptide: Molybdenum cofactor cytidylyltransferase (192 aa).

D101 lines the Mg(2+) pocket.

As to quaternary structure, monomer. Interacts with the Moco-binding chaperone PaoD. It depends on Mg(2+) as a cofactor. Requires Mn(2+) as cofactor.

It carries out the reaction Mo-molybdopterin + CTP + H(+) = Mo-molybdopterin cytosine dinucleotide + diphosphate. Its function is as follows. Transfers a CMP moiety from CTP to Mo-molybdopterin (Mo-MPT) cofactor (Moco or molybdenum cofactor) to form Mo-molybdopterin cytosine dinucleotide (Mo-MCD) cofactor. Is specific for CTP; other nucleotides such as ATP and GTP cannot be utilized. Is also able to convert MPT to MCD in the absence of molybdate, however, with only one catalytic turnover. This is Molybdenum cofactor cytidylyltransferase (mocA) from Escherichia coli (strain K12).